The primary structure comprises 241 residues: Glucosamine-6-phosphate deaminase (241 aa).

Aspartate 67 serves as the catalytic Proton acceptor; for enolization step. The active-site For ring-opening step is asparagine 136. Histidine 138 (proton acceptor; for ring-opening step) is an active-site residue. Glutamate 143 functions as the For ring-opening step in the catalytic mechanism.

It belongs to the glucosamine/galactosamine-6-phosphate isomerase family. NagB subfamily.

It catalyses the reaction alpha-D-glucosamine 6-phosphate + H2O = beta-D-fructose 6-phosphate + NH4(+). Its pathway is amino-sugar metabolism; N-acetylneuraminate degradation; D-fructose 6-phosphate from N-acetylneuraminate: step 5/5. Catalyzes the reversible isomerization-deamination of glucosamine 6-phosphate (GlcN6P) to form fructose 6-phosphate (Fru6P) and ammonium ion. The sequence is that of Glucosamine-6-phosphate deaminase from Clostridium acetobutylicum (strain ATCC 824 / DSM 792 / JCM 1419 / IAM 19013 / LMG 5710 / NBRC 13948 / NRRL B-527 / VKM B-1787 / 2291 / W).